The sequence spans 591 residues: CDK5RAP3 protein homolog (591 aa).

The segment covering R232 to P250 has biased composition (low complexity). Disordered stretches follow at residues R232–L252 and T269–G303. The span at A279–G303 shows a compositional bias: gly residues. 3 consecutive short sequence motifs (shuffled ATG8-binding motif) follow at residues I311–D314, I334–D337, and I369–D372. The span at N386–L401 shows a compositional bias: low complexity. Positions N386–D416 are disordered.

The protein belongs to the CDK5RAP3 family. Substrate adapter component of the UFM1 ribosome E3 ligase (UREL) complex. Interacts with ATG8 family proteins.

Its function is as follows. Substrate adapter of E3 ligase complexes mediating ufmylation, the covalent attachment of the ubiquitin-like modifier UFM1 to substrate proteins, and which is involved in various processes, such as ribosome recycling and reticulophagy (also called ER-phagy). The polypeptide is CDK5RAP3 protein homolog (Chlamydomonas reinhardtii (Chlamydomonas smithii)).